A 949-amino-acid chain; its full sequence is uncharacterized protein (949 aa).

The Calponin-homology (CH) domain maps to 64–170 (LCSVHEAKKW…YCLHALSYLL (107 aa)).

It is found in the nucleus. This is an uncharacterized protein from Schizosaccharomyces pombe (strain 972 / ATCC 24843) (Fission yeast).